A 435-amino-acid polypeptide reads, in one-letter code: ATP-dependent protease ATPase subunit HslU (435 aa).

ATP-binding positions include Ile-18, 60–65, Asp-248, Glu-313, and Arg-385; that span reads GVGKTE.

It belongs to the ClpX chaperone family. HslU subfamily. As to quaternary structure, a double ring-shaped homohexamer of HslV is capped on each side by a ring-shaped HslU homohexamer. The assembly of the HslU/HslV complex is dependent on binding of ATP.

Its subcellular location is the cytoplasm. Its function is as follows. ATPase subunit of a proteasome-like degradation complex; this subunit has chaperone activity. The binding of ATP and its subsequent hydrolysis by HslU are essential for unfolding of protein substrates subsequently hydrolyzed by HslV. HslU recognizes the N-terminal part of its protein substrates and unfolds these before they are guided to HslV for hydrolysis. This is ATP-dependent protease ATPase subunit HslU from Rhizobium etli (strain CIAT 652).